Reading from the N-terminus, the 315-residue chain is Solute carrier family 25 member 32 (315 aa).

Solcar repeat units lie at residues 20 to 109 (HVRY…IKSY), 118 to 209 (LEAT…LKLK), and 222 to 306 (LSTV…VSHF). Helical transmembrane passes span 26–43 (LVAG…LHPL), 89–106 (VWGA…YNAI), 123–143 (YLVS…PLWV), 186–203 (FVPG…FMAY), 227–243 (YISV…AATY), and 281–300 (GIAP…FVVY).

It belongs to the mitochondrial carrier (TC 2.A.29) family.

It localises to the mitochondrion inner membrane. The enzyme catalyses FAD(in) = FAD(out). Facilitates flavin adenine dinucleotide (FAD) translocation across the mitochondrial inner membrane into the mitochondrial matrix where it acts as a redox cofactor to assist flavoenzyme activities in fundamental metabolic processes including fatty acid beta-oxidation, amino acid and choline metabolism as well as mitochondrial electron transportation. In particular, provides FAD to DLD dehydrogenase of the glycine cleavage system, part of mitochondrial one-carbon metabolic pathway involved in neural tube closure in early embryogenesis. The sequence is that of Solute carrier family 25 member 32 from Macaca fascicularis (Crab-eating macaque).